Consider the following 349-residue polypeptide: MQGLGALFLLLTACLTLKADNVPTLPDIQVQENFNEARIYGKWFNLAVGSTCPWLRRIKNKMSVSTLVLQEGATEAEISVTSTQWRKGVCEEISGVYQKTDIDGKFLYHKSKWNATLESYVVHTNYDEYAIFLTKKFSHRHGPTITAKLYGREPQLRDSLLQEFREVALSVGIPENSIVFMADRGECVPGDREVESTSFARARRAVLPQENEGSGSEPLITGTLKKEDSCQLNYSEGPCLGMQQKYYYNGASMACETFQYGGCLGNGNNFASEKECLQTCRTIAACNLPIVQGPCRAFAELWAFDAAQGKCIQFIYGGCKGNGNKFYSEKECKEYCGVPGDGYEELTRS.

Residues 1-19 (MQGLGALFLLLTACLTLKA) form the signal peptide. Residues C52 and K110 each coordinate 3-hydroxy-L-kynurenine. An intrachain disulfide couples C90 to C187. N-linked (GlcNAc...) asparagine glycosylation occurs at N114. The 3-hydroxy-L-kynurenine site is built by K136 and K148. O-linked (Xyl...) (chondroitin sulfate) serine glycosylation occurs at S214. 6 disulfides stabilise this stretch: C230–C280, C239–C263, C255–C276, C286–C336, C295–C319, and C311–C332. BPTI/Kunitz inhibitor domains are found at residues 230 to 280 (CQLN…LQTC) and 286 to 336 (CNLP…KEYC). An N-linked (GlcNAc...) asparagine glycan is attached at N233.

It in the N-terminal section; belongs to the calycin superfamily. Lipocalin family. Monomer. Homodimer. In plasma, it occurs as a monomer or dimer and in covalently-linked complexes with immunoglobulin A (IgA), ALB/albumin and F2/prothrombin. Chromophore-bound alpha-1-microglobulin interacts with the constant region of immunoglobulin A. Chromophore-bound alpha-1-microglobulin interacts with ALB with molar ratio 2:1 and 1:1; this interaction does not prevent fatty acid binding to ALB. Interacts with F2/prothrombin (via N-terminus) with molar ratio 2:1 and 1:1; this interaction does not prevent the activation of prothrombin to thrombin. Interacts with NDUFAB1, a subunit of mitochondrial complex I. Interacts with FN1. In terms of assembly, I-alpha-I plasma protease inhibitors are assembled from one or two heavy chains (HC) and one light chain, bikunin. Inter-alpha-inhibitor (I-alpha-I) is composed of ITIH1/HC1, ITIH2/HC2 and bikunin, and pre-alpha-inhibitor (P-alpha-I) of ITIH3/HC3 and bikunin. Interacts with TNFAIP6 (via Link domain). As to quaternary structure, monomer. Also occurs as a complex with tryptase in mast cells. Post-translationally, the precursor is proteolytically processed into separately functioning proteins. In terms of processing, 3-hydroxykynurenine, an oxidized tryptophan metabolite that is common in biological fluids, reacts with Cys-53, Lys-111, Lys-137, and Lys-149 to form heterogeneous polycyclic chromophores including hydroxanthommatin. The reaction by alpha-1-microglobulin is autocatalytic; the human protein forms chromophore even when expressed in insect and bacterial cells. The chromophore can react with accessible cysteines forming non-reducible thioether cross-links with other molecules of alpha-1-microglobulin or with other proteins such as Ig alpha-1 chain C region 'Cys-352'. Heavy chains are interlinked with bikunin via a chondroitin 4-sulfate bridge to the C-terminal aspartate. Post-translationally, proteolytically cleaved by PRSS3 at Kunitz domain 2. In terms of tissue distribution, expressed by the liver and secreted in plasma.

The protein localises to the secreted. The protein resides in the endoplasmic reticulum. It is found in the cytoplasm. It localises to the cytosol. Its subcellular location is the cell membrane. The protein localises to the nucleus membrane. The protein resides in the mitochondrion inner membrane. It is found in the extracellular space. It localises to the extracellular matrix. In terms of biological role, antioxidant and tissue repair protein with reductase, heme-binding and radical-scavenging activities. Removes and protects against harmful oxidants and repairs macromolecules in intravascular and extravascular spaces and in intracellular compartments. Intravascularly, plays a regulatory role in red cell homeostasis by preventing heme- and reactive oxygen species-induced cell damage. Binds and degrades free heme to protect fetal and adult red blood cells from hemolysis. Reduces extracellular methemoglobin, a Fe3+ (ferric) form of hemoglobin that cannot bind oxygen, back to the Fe2+ (ferrous) form deoxyhemoglobin, which has oxygen-carrying potential. Upon acute inflammation, inhibits oxidation of low-density lipoprotein particles by MPO and limits vascular damage. Extravascularly, protects from oxidation products formed on extracellular matrix structures and cell membranes. Catalyzes the reduction of carbonyl groups on oxidized collagen fibers and preserves cellular and extracellular matrix ultrastructures. Importantly, counteracts the oxidative damage at blood-placenta interface, preventing leakage of free fetal hemoglobin into the maternal circulation. Intracellularly, has a role in maintaining mitochondrial redox homeostasis. Bound to complex I of the respiratory chain of mitochondria, may scavenge free radicals and preserve mitochondrial ATP synthesis. Protects renal tubule epithelial cells from heme-induced oxidative damage to mitochondria. Reduces cytochrome c from Fe3+ (ferric) to the Fe2+ (ferrous) state through formation of superoxide anion radicals in the presence of ascorbate or NADH/NADPH electron donor cofactors, ascorbate being the preferred cofactor. Has a chaperone role in facilitating the correct folding of bikunin in the endoplasmic reticulum compartment. Its function is as follows. Kunitz-type serine protease inhibitor and structural component of extracellular matrix with a role in extracellular space remodeling and cell adhesion. Among others, has antiprotease activity toward kallikrein, a protease involved in airway inflammation; inhibits GZMK/granzyme, a granule-stored serine protease involved in NK and T cell cytotoxic responses; and inhibits PLG/plasmin, a protease required for activation of matrix metalloproteinases. As part of I-alpha-I complex, provides for the heavy chains to be transferred from I-alpha-I complex to hyaluronan in the presence of TNFAIP6, in a dynamic process that releases free bikunin and remodels extracellular matrix proteoglycan structures. Free bikunin, but not its heavy chain-bound form, acts as a potent protease inhibitor in airway secretions. Part of hyaluronan-rich extracellular matrix that surrounds oocyte during cumulus oophorus expansion, an indispensable process for proper ovulation. Also inhibits calcium oxalate crystallization. Functionally, kunitz-type serine protease inhibitor. Has high catalytic efficiency for F10/blood coagulation factor Xa and may act as an anticoagulant by inhibiting prothrombin activation. Inhibits trypsin and mast cell CMA1/chymase and tryptase proteases. The polypeptide is Protein AMBP (Ambp) (Rattus norvegicus (Rat)).